A 444-amino-acid chain; its full sequence is E1B 55 kDa protein (444 aa).

Residues 1 to 35 (MEQNADMEPDRQVNQRPPRFRARGAGVRGRGRVRR) are disordered. 2 positions are modified to phosphoserine: serine 438 and serine 439.

It belongs to the adenoviridae E1B 55 kDa protein family. In terms of assembly, interacts with host PML-4 and PML-5; this interaction promotes efficient subnuclear targeting of E1B-55K to PML nuclear bodies. Interacts with E4-ORF3 protein. Interacts with E4-ORF6 protein.

It is found in the host nucleus. It localises to the host cytoplasm. In terms of biological role, plays a major role to prevent cellular inhibition of viral genome replication. Assembles an SCF-like E3 ubiquitin ligase complex based on the cellular proteins ELOB, ELOC, CUL5 and RBX1, in cooperation with viral E4orf6. This viral RING-type ligase ubiquitinates cellular substrates and targets them to proteasomal degradation: TP53/p53, LIG4, MRE11-RAD50-NBS1 (MRN) complex, ITGA3, DAXX and BLM. E1B-55K probably acts as the substrate-specific adapter of the SCF-like E3 ubiquitin ligase complex. Degradation of host TP53/p53 activity is essential for preventing E1A-induced TP53 accumulation that would otherwise lead to cell apoptosis and growth arrest. E1B-55K also inactivates TP53 transcription-factor activity by binding its transactivation domain. E1B-55K also functions as a SUMO1 E3 ligase for TP53 which causes the latter to be sequestered in promyelocytic leukemia (PML) nuclear bodies thereby contributing to maximal inhibition of TP53 function. This is E1B 55 kDa protein from Canis lupus familiaris (Dog).